A 99-amino-acid chain; its full sequence is DNA-binding protein HU (99 aa).

Residues 63-82 are disordered; it reads HRKEREGRNPKTGAKMKIDA.

It belongs to the bacterial histone-like protein family. In terms of assembly, homodimer.

In terms of biological role, histone-like DNA-binding protein which is capable of wrapping DNA to stabilize it, and thus to prevent its denaturation under extreme environmental conditions. The sequence is that of DNA-binding protein HU (hup) from Rickettsia prowazekii (strain Madrid E).